Here is a 281-residue protein sequence, read N- to C-terminus: ATP phosphoribosyltransferase (281 aa).

This sequence belongs to the ATP phosphoribosyltransferase family. Long subfamily. Requires Mg(2+) as cofactor.

It localises to the cytoplasm. The enzyme catalyses 1-(5-phospho-beta-D-ribosyl)-ATP + diphosphate = 5-phospho-alpha-D-ribose 1-diphosphate + ATP. Its pathway is amino-acid biosynthesis; L-histidine biosynthesis; L-histidine from 5-phospho-alpha-D-ribose 1-diphosphate: step 1/9. With respect to regulation, feedback inhibited by histidine. Catalyzes the condensation of ATP and 5-phosphoribose 1-diphosphate to form N'-(5'-phosphoribosyl)-ATP (PR-ATP). Has a crucial role in the pathway because the rate of histidine biosynthesis seems to be controlled primarily by regulation of HisG enzymatic activity. The polypeptide is ATP phosphoribosyltransferase (Kocuria rhizophila (strain ATCC 9341 / DSM 348 / NBRC 103217 / DC2201)).